The primary structure comprises 291 residues: MSEKLQKVLARAGHGSRREIESIIEAGRVSVDGKIATLGDRVEVTPGLKIRIDGHLISVKESAEQICRVLAYYKPEGELCTRNDPEGRPTVFDRLPKLRGARWIAVGRLDVNTCGLLLFTTDGELANRLMHPSREVEREYAVRVFGQVDESKLRDLSRGVQLEDGPAAFKTIKFSGGEGINQWYNVTLTEGRNREVRRLWEAVGVQVSRLIRVRYGDIPLPKGLPRGGWTELDLAQTNYLRGLVELPPETSSKVAVEKDRRRMKANQIRRAVKRHSQIAGGRRSGGRNNNG.

One can recognise an S4 RNA-binding domain in the interval 3–63 (EKLQKVLARA…GHLISVKESA (61 aa)). The Nucleophile role is filled by Asp-110.

The protein belongs to the pseudouridine synthase RsuA family.

The enzyme catalyses uridine(2605) in 23S rRNA = pseudouridine(2605) in 23S rRNA. In terms of biological role, responsible for synthesis of pseudouridine from uracil-2605 in 23S ribosomal RNA. This is Ribosomal large subunit pseudouridine synthase B (rluB) from Salmonella typhimurium (strain LT2 / SGSC1412 / ATCC 700720).